The primary structure comprises 349 residues: 11-beta-hydroxysteroid dehydrogenase 1A (349 aa).

The chain crosses the membrane as a helical; Signal-anchor for type II membrane protein span at residues 10–30 (LTAPFFTFFGLCFFLPPFYFF). NADP(+) is bound by residues 54–80 (GASSGIGEQLAYEYACRGACLALTARR) and aspartate 105. A substrate-binding site is contributed by serine 184. The Proton acceptor role is filled by tyrosine 197. Residues 197–201 (YNASK) and lysine 201 contribute to the NADP(+) site.

The protein belongs to the short-chain dehydrogenases/reductases (SDR) family. Expressed in the above-ground part of seedlings, especially in the vascular tissues. Also detected in the buds and silique pedicels. Highly induced in oil-accumulating tissues of maturing seeds.

The protein resides in the lipid droplet. It is found in the membrane. The catalysed reaction is an 11beta-hydroxysteroid + NADP(+) = an 11-oxosteroid + NADPH + H(+). It carries out the reaction 17beta-estradiol + NADP(+) = estrone + NADPH + H(+). It catalyses the reaction corticosterone + NADP(+) = 11-dehydrocorticosterone + NADPH + H(+). The enzyme catalyses cortisone + NADPH + H(+) = cortisol + NADP(+). Catalyzes 11-beta, 17-beta-hydroxysteroid and reduces 17-beta-ketosteroids. Involved in regulating plant growth and development, probably promoting or mediating brassinosteroid effects. Plays a role during seed maturation. This chain is 11-beta-hydroxysteroid dehydrogenase 1A (HSD1), found in Arabidopsis thaliana (Mouse-ear cress).